The sequence spans 386 residues: ORC1-type DNA replication protein 3 (386 aa).

ATP contacts are provided by residues 65-69 (TGKTF) and Tyr-206.

This sequence belongs to the CDC6/cdc18 family.

Functionally, involved in regulation of DNA replication. The protein is ORC1-type DNA replication protein 3 (cdc6-3) of Sulfurisphaera tokodaii (strain DSM 16993 / JCM 10545 / NBRC 100140 / 7) (Sulfolobus tokodaii).